The chain runs to 382 residues: 8-amino-7-oxononanoate synthase (382 aa).

Position 26 (Arg-26) interacts with substrate. 104–105 lines the pyridoxal 5'-phosphate pocket; it reads GY. His-129 is a binding site for substrate. Residues Ser-175, 200–203, and 232–235 contribute to the pyridoxal 5'-phosphate site; these read DEAH and TLSK. Lys-235 is modified (N6-(pyridoxal phosphate)lysine). Thr-345 serves as a coordination point for substrate.

This sequence belongs to the class-II pyridoxal-phosphate-dependent aminotransferase family. BioF subfamily. Homodimer. Pyridoxal 5'-phosphate is required as a cofactor.

The catalysed reaction is 6-carboxyhexanoyl-[ACP] + L-alanine + H(+) = (8S)-8-amino-7-oxononanoate + holo-[ACP] + CO2. The protein operates within cofactor biosynthesis; biotin biosynthesis. Functionally, catalyzes the decarboxylative condensation of pimeloyl-[acyl-carrier protein] and L-alanine to produce 8-amino-7-oxononanoate (AON), [acyl-carrier protein], and carbon dioxide. This Mycobacterium sp. (strain JLS) protein is 8-amino-7-oxononanoate synthase.